The sequence spans 121 residues: NADH-quinone oxidoreductase subunit A 1 (121 aa).

The next 3 membrane-spanning stretches (helical) occupy residues 11-31, 65-85, and 90-110; these read IAIF…APFA, LVSI…PWAV, and MGWF…VGFI.

Belongs to the complex I subunit 3 family. NDH-1 is composed of 14 different subunits. Subunits NuoA, H, J, K, L, M, N constitute the membrane sector of the complex.

It is found in the cell inner membrane. The enzyme catalyses a quinone + NADH + 5 H(+)(in) = a quinol + NAD(+) + 4 H(+)(out). Its function is as follows. NDH-1 shuttles electrons from NADH, via FMN and iron-sulfur (Fe-S) centers, to quinones in the respiratory chain. The immediate electron acceptor for the enzyme in this species is believed to be ubiquinone. Couples the redox reaction to proton translocation (for every two electrons transferred, four hydrogen ions are translocated across the cytoplasmic membrane), and thus conserves the redox energy in a proton gradient. The chain is NADH-quinone oxidoreductase subunit A 1 from Rhizobium meliloti (strain 1021) (Ensifer meliloti).